The sequence spans 79 residues: Large ribosomal subunit protein uL29 (79 aa).

Belongs to the universal ribosomal protein uL29 family.

In Tropheryma whipplei (strain Twist) (Whipple's bacillus), this protein is Large ribosomal subunit protein uL29.